Here is a 110-residue protein sequence, read N- to C-terminus: Non-specific lipid-transfer protein 4 (110 aa).

Positions 1-17 are cleaved as a signal peptide; sequence CVVLVMCMVVIAPMAEG. Intrachain disulfides connect Cys21–Cys68, Cys31–Cys45, Cys46–Cys91, and Cys66–Cys105.

Belongs to the plant LTP family.

Plant non-specific lipid-transfer proteins transfer phospholipids as well as galactolipids across membranes. May play a role in wax or cutin deposition in the cell walls of expanding epidermal cells and certain secretory tissues. This chain is Non-specific lipid-transfer protein 4, found in Lens culinaris (Lentil).